The following is a 566-amino-acid chain: DNA ligase B (566 aa).

Catalysis depends on K125, which acts as the N6-AMP-lysine intermediate.

This sequence belongs to the NAD-dependent DNA ligase family. LigB subfamily.

It carries out the reaction NAD(+) + (deoxyribonucleotide)n-3'-hydroxyl + 5'-phospho-(deoxyribonucleotide)m = (deoxyribonucleotide)n+m + AMP + beta-nicotinamide D-nucleotide.. Functionally, catalyzes the formation of phosphodiester linkages between 5'-phosphoryl and 3'-hydroxyl groups in double-stranded DNA using NAD as a coenzyme and as the energy source for the reaction. The chain is DNA ligase B from Pseudomonas putida (strain ATCC 47054 / DSM 6125 / CFBP 8728 / NCIMB 11950 / KT2440).